Consider the following 231-residue polypeptide: Probable pyridoxamine 5'-phosphate oxidase (231 aa).

Residue Gln-20–Lys-23 participates in pyridoxal 5'-phosphate binding. Arg-74–Leu-77 contacts FMN. Lys-79 serves as a coordination point for pyridoxal 5'-phosphate. FMN is bound by residues Phe-89–Thr-90, Lys-96–Lys-97, and Gln-119. Residues Tyr-137, Arg-141, and Ser-145 each coordinate pyridoxal 5'-phosphate. Residues Gln-154 to Ser-155 and Trp-202 each bind FMN. Arg-208–His-210 contacts pyridoxal 5'-phosphate. FMN is bound at residue Arg-212.

The protein belongs to the pyridoxamine 5'-phosphate oxidase family. Homodimer. FMN serves as cofactor.

The catalysed reaction is pyridoxamine 5'-phosphate + O2 + H2O = pyridoxal 5'-phosphate + H2O2 + NH4(+). It carries out the reaction pyridoxine 5'-phosphate + O2 = pyridoxal 5'-phosphate + H2O2. It functions in the pathway cofactor metabolism; pyridoxal 5'-phosphate salvage; pyridoxal 5'-phosphate from pyridoxamine 5'-phosphate: step 1/1. Its pathway is cofactor metabolism; pyridoxal 5'-phosphate salvage; pyridoxal 5'-phosphate from pyridoxine 5'-phosphate: step 1/1. In terms of biological role, catalyzes the oxidation of either pyridoxine 5'-phosphate (PNP) or pyridoxamine 5'-phosphate (PMP) into pyridoxal 5'-phosphate (PLP). In Schizosaccharomyces pombe (strain 972 / ATCC 24843) (Fission yeast), this protein is Probable pyridoxamine 5'-phosphate oxidase.